The chain runs to 54 residues: Light-harvesting protein B-870 beta chain (54 aa).

Residues 1 to 20 (EVKQESLSGITEGEAKEFHK) are Cytoplasmic-facing. A bacteriochlorophyll is bound by residues H19 and H37. The chain crosses the membrane as a helical span at residues 21 to 43 (IFTSSILVFFGVAAFAHLLVWIW). Residues 44–54 (RPWVPGPNGYS) are Periplasmic-facing.

It belongs to the antenna complex beta subunit family. The core complex is formed by different alpha and beta chains, binding bacteriochlorophyll molecules, and arranged most probably in tetrameric structures disposed around the reaction center. The non-pigmented gamma chains may constitute additional components.

It is found in the cell inner membrane. In terms of biological role, antenna complexes are light-harvesting systems, which transfer the excitation energy to the reaction centers. This Rhodospirillum rubrum protein is Light-harvesting protein B-870 beta chain.